The sequence spans 687 residues: Chloride channel protein ClC-Ka (687 aa).

5 consecutive transmembrane segments (helical) span residues 52–72 (FLVA…FAIG), 94–114 (LSWT…SQSI), 161–181 (IFLG…AYLG), 204–224 (AAAV…LFSI), and 236–256 (YWRG…LGVF). Ca(2+) contacts are provided by glutamate 259, glutamate 261, aspartate 278, and glutamate 281. 6 helical membrane-spanning segments follow: residues 282–302 (IFFF…YLFC), 325–345 (PSYA…PGVG), 396–416 (FTIF…LILA), 417–437 (TTIP…AAIG), 458–478 (VNPI…SGAV), and 486–506 (LLAF…MAVL). Topologically, residues 507–687 (AANAISQNCQ…STLINPPAPK (181 aa)) are cytoplasmic. 2 CBS domains span residues 551-609 (MNCN…QPAS) and 626-687 (CPTQ…PAPK).

The protein belongs to the chloride channel (TC 2.A.49) family. CLCNKA subfamily. Homodimer. Interacts with BSND. In terms of tissue distribution, expressed predominantly in the kidney. Expressed strongly in the cortical thick ascending limb and the distal convoluted tubule, with minor expression in the S3 segment of the proximal tubule and the cortical collecting tubule.

The protein localises to the basolateral cell membrane. The catalysed reaction is chloride(in) = chloride(out). It catalyses the reaction bromide(in) = bromide(out). It carries out the reaction nitrate(in) = nitrate(out). The enzyme catalyses iodide(out) = iodide(in). Activated by extracellular Ca(2+) and inhibited by extracellular acidic pH. Anion-selective channel permeable to small monovalent anions with ion selectivity for chloride &gt; bromide &gt; nitrate &gt; iodide. Forms a homodimeric channel where each subunit has its own ion conduction pathway. Conducts double-barreled currents controlled by two types of gates, two fast gates that control each subunit independently and a slow common gate that opens and shuts off both subunits simultaneously. Assembles with the regulatory subunit BSND/Barttin for sorting at the basolateral plasma membrane domain. CLCNKA:BSND channels are activated upon membrane hyperpolarization mostly controlled by fast gating. Mediates transepithelial chloride transport from the lumen to interstitial compartment along the thin ascending limb of Henle's loop, contributing to generation of hypertonic medullary interstitium as a countercurrent system to achieve urine concentration. Conducts chloride currents in the stria vascularis of the inner ear to establish the endocochlear potential necessary for normal hearing. The chain is Chloride channel protein ClC-Ka from Rattus norvegicus (Rat).